The chain runs to 464 residues: ATP-dependent protease ATPase subunit HslU (464 aa).

ATP-binding positions include valine 18, glycine 60 to glutamate 65, aspartate 277, glutamate 342, and arginine 414.

The protein belongs to the ClpX chaperone family. HslU subfamily. A double ring-shaped homohexamer of HslV is capped on each side by a ring-shaped HslU homohexamer. The assembly of the HslU/HslV complex is dependent on binding of ATP.

The protein localises to the cytoplasm. Functionally, ATPase subunit of a proteasome-like degradation complex; this subunit has chaperone activity. The binding of ATP and its subsequent hydrolysis by HslU are essential for unfolding of protein substrates subsequently hydrolyzed by HslV. HslU recognizes the N-terminal part of its protein substrates and unfolds these before they are guided to HslV for hydrolysis. This Lactobacillus leichmannii protein is ATP-dependent protease ATPase subunit HslU.